The following is a 1065-amino-acid chain: NLR family CARD domain-containing protein 3 (1065 aa).

The segment covering 1–10 (MRKQEVRTGR) has biased composition (basic and acidic residues). The tract at residues 1 to 62 (MRKQEVRTGR…PLGPCSNDSR (62 aa)) is disordered. One can recognise an NACHT domain in the interval 139 to 460 (RVSITIGVAG…YCFTHLSLQE (322 aa)). Position 145 to 152 (145 to 152 (GVAGMGKT)) interacts with ATP. The TRAF6-binding signature appears at 457–460 (SLQE). LRR repeat units follow at residues 617 to 639 (EANL…LLYC), 641 to 663 (KLRL…VLSG), 665 to 688 (DCRI…ALAR), 693 to 716 (NRSL…ALAD), 721 to 744 (NRTL…SMAE), 749 to 772 (NRTL…RMAD), 777 to 800 (NRSL…ALAE), 805 to 828 (NQGL…ALMG), 833 to 856 (NQTL…AIAH), 861 to 884 (NSTL…AIAV), 889 to 912 (NRTL…ALGQ), 917 to 940 (NRSL…AVAR), 945 to 968 (NTAL…VLGE), 973 to 996 (NRTL…ALAN), 1001 to 1029 (NSSL…LSGN), and 1031 to 1052 (RLQH…MISE).

This sequence belongs to the NLRP family. In terms of assembly, directly interacts (via CARD) with TMEM173/STING; this interaction reduces TMEM173 trafficking to the perinuclear region in response to interferon stimulatory DNA. Also interacts, but to a lesser extent, with TBK1. Interacts with TRAF6; this interaction results in decreased TRAF6 'Lys-63'-linked polyubiquitination, but leaves 'Lys-48'-linked chains unchanged, promoting TRAF6 protein degradation. Interacts with PIK3R1/PIK3R2; this interaction disrupts the association between PIK3R1/PIK3R2 and the p110 catalytic subunit PIK3CA/PIK3CB/PIK3CD and reduces PIK3R1/PIK3R2 activation. Weakly interacts with PYCARD/ASC. Interacts with CASP1 and CASP5.

The protein localises to the cytoplasm. Functionally, negative regulator of the innate immune response. Attenuates signaling pathways activated by Toll-like receptors (TLRs) and the DNA sensor STING/TMEM173 in response to pathogen-associated molecular patterns, such as intracellular poly(dA:dT), but not poly(I:C), or in response to DNA virus infection, including that of Herpes simplex virus 1 (HSV1). May affect TLR4 signaling by acting at the level of TRAF6 ubiquitination, decreasing the activating 'Lys-63'-linked ubiquitination and leaving unchanged the degradative 'Lys-48'-linked ubiquitination. Inhibits the PI3K-AKT-mTOR pathway possibly by directly interacting with the posphatidylinositol 3-kinase regulatory subunit p85 (PIK3R1/PIK3R2) and disrupting the association between PIK3R1/PIK3R2 and the catalytic subunit p110 (PIK3CA/PIK3CB/PIK3CD) and reducing PIK3R1/PIK3R2 activation. Via its regulation of the PI3K-AKT-mTOR pathway, controls cell proliferation, predominantly in intestinal epithelial cells. May also affect NOD1- or NOD2-mediated NF-kappa-B activation. Might also affect the inflammatory response by preventing NLRP3 inflammasome formation, CASP1 cleavage and IL1B maturation. The polypeptide is NLR family CARD domain-containing protein 3 (NLRC3) (Homo sapiens (Human)).